The following is a 544-amino-acid chain: Chaperonin GroEL 2 (544 aa).

ATP is bound by residues 30–33 (TLGP), lysine 51, 87–91 (DGTTT), glycine 415, and aspartate 496.

It belongs to the chaperonin (HSP60) family. Forms a cylinder of 14 subunits composed of two heptameric rings stacked back-to-back. Interacts with the co-chaperonin GroES.

The protein localises to the cytoplasm. The enzyme catalyses ATP + H2O + a folded polypeptide = ADP + phosphate + an unfolded polypeptide.. In terms of biological role, together with its co-chaperonin GroES, plays an essential role in assisting protein folding. The GroEL-GroES system forms a nano-cage that allows encapsulation of the non-native substrate proteins and provides a physical environment optimized to promote and accelerate protein folding. The chain is Chaperonin GroEL 2 from Rhizobium johnstonii (strain DSM 114642 / LMG 32736 / 3841) (Rhizobium leguminosarum bv. viciae).